A 404-amino-acid chain; its full sequence is Glutamyl-tRNA reductase (404 aa).

Substrate is bound by residues Thr-47–Arg-50, Ser-94, Glu-99–Glu-101, and Gln-105. Cys-48 (nucleophile) is an active-site residue. Residue Gly-174–Gly-179 coordinates NADP(+).

In terms of assembly, homotetramer.

The enzyme catalyses (S)-4-amino-5-oxopentanoate + tRNA(Glu) + NADP(+) = L-glutamyl-tRNA(Glu) + NADPH + H(+). It participates in porphyrin-containing compound metabolism; protoporphyrin-IX biosynthesis; 5-aminolevulinate from L-glutamyl-tRNA(Glu): step 1/2. Inhibited by heavy metal compounds, Zn(2+), and heme. Also competitively inhibited by glutamycin. Catalyzes the NADPH-dependent reduction of glutamyl-tRNA(Glu) to glutamate 1-semialdehyde (GSA). In the absence of NADPH, exhibits substrate esterase activity, leading to the release of glutamate from tRNA. The chain is Glutamyl-tRNA reductase (hemA) from Methanopyrus kandleri (strain AV19 / DSM 6324 / JCM 9639 / NBRC 100938).